The following is a 369-amino-acid chain: Peptide chain release factor 2 (369 aa).

The residue at position 249 (Q249) is an N5-methylglutamine.

The protein belongs to the prokaryotic/mitochondrial release factor family. Methylated by PrmC. Methylation increases the termination efficiency of RF2.

The protein resides in the cytoplasm. Its function is as follows. Peptide chain release factor 2 directs the termination of translation in response to the peptide chain termination codons UGA and UAA. The protein is Peptide chain release factor 2 of Thermosipho africanus (strain TCF52B).